The primary structure comprises 718 residues: Polyribonucleotide nucleotidyltransferase (718 aa).

Mg(2+) is bound by residues aspartate 496 and aspartate 502. Residues 563–622 form the KH domain; that stretch reads PRLLTIKIDPDMIGLVIGPGGKTIKGITEETGAKIDIEDDGTVTISAVDENKAKRARNIV. The S1 motif domain occupies 632–700; sequence GDVYAGRVTR…NKGRINLTRL (69 aa).

This sequence belongs to the polyribonucleotide nucleotidyltransferase family. The cofactor is Mg(2+).

It is found in the cytoplasm. It carries out the reaction RNA(n+1) + phosphate = RNA(n) + a ribonucleoside 5'-diphosphate. Involved in mRNA degradation. Catalyzes the phosphorolysis of single-stranded polyribonucleotides processively in the 3'- to 5'-direction. The chain is Polyribonucleotide nucleotidyltransferase from Trichormus variabilis (strain ATCC 29413 / PCC 7937) (Anabaena variabilis).